We begin with the raw amino-acid sequence, 334 residues long: Tryptophan--tRNA ligase (334 aa).

Residues 12–14 (QPS) and 20–21 (GN) each bind ATP. The short motif at 13 to 21 (PSGIPTLGN) is the 'HIGH' region element. Asp-136 serves as a coordination point for L-tryptophan. ATP contacts are provided by residues 148-150 (GKD), Ile-187, and 196-200 (KMSKS). The 'KMSKS' region motif lies at 196-200 (KMSKS).

This sequence belongs to the class-I aminoacyl-tRNA synthetase family. As to quaternary structure, homodimer.

The protein resides in the cytoplasm. It catalyses the reaction tRNA(Trp) + L-tryptophan + ATP = L-tryptophyl-tRNA(Trp) + AMP + diphosphate + H(+). Catalyzes the attachment of tryptophan to tRNA(Trp). The chain is Tryptophan--tRNA ligase from Wigglesworthia glossinidia brevipalpis.